The primary structure comprises 895 residues: MIIERIRLRNFLSHSDSDIYFDTGINMIIGQNGAGKSSIVDAIRFALFSDKRTRRTEDMIKKGERYMEVELYFRSEGHSYRIRRTIERRGKSISTDAEIERDGSIITRGASDVSNYVEKNVLNINKDVFLTSIFVRQGEMDALVSKDPAERKKILDEILNIDRLEAGYLLLKEVIDDLTANVSDYDYLKNELQSKINEIDNNNKQIEELESKLRLIEPEIKALEEEINIKENKKDHLNEELHRLNAQLETIKKYEMELAESQSRKASIEMEVVKLPSIEEELKRLENNAAVVKRNEIIEYINLKKDLGSLSEIIEGLKSDLSKYDEAHRKLEDLQSFRSEFLEKKKRKEDLDKLRSSLKEDEDNYQSAVRNIENIKKWIENEEKEIERMSAFISEILKIQEITPEIINSRRAEINSSLMQIEGKIASLNASIDAMRSHKMEVEENAAMLSGRGVCPVCGTHLGTEKSEDLVKHYGEEASRLEEDINKTENEIKKLDEERKHQKKLLDRINGKDVERLIASYNLLSSKRAELKKFMDDEARLKEAHLKAEAAISQYNSIDLGDLEAKNEEWLKANAVISSIDIENIRSRFEEKNKQLNDIIKRMNEIEVNIPDVESYNENSLKRIDEELNSLRNKKNELYAKKAAMDEIQKTIEHFKEEISKKKGIEDSQAEVNAQLLQINDDLKQLSSRLDKINVDQYEWKSLHKVLLQDNEKLNIAVADIRKRLEKKETIIKAIADLKRVREAFSKDGVPAIIRKSASEFITNQTRQYIQRFELDIDDVDVDQDFNITVFRGGIAEGIDSLSGGERMAVAFALRVAIAQFLNKDVSLLVMDEPTAFLDEDRRSDLANIIEYSLKDSSGIPQVIMISHHRELLSASDLALEVKKRNGSSIVDVIR.

ATP-binding positions include N32–S38 and Q137. A coiled-coil region spans residues S183 to K253. Positions R411–D507 constitute a Zinc-hook domain. The Zn(2+) site is built by C455 and C458. 2 coiled-coil regions span residues T464 to N510 and E618 to E647.

This sequence belongs to the SMC family. RAD50 subfamily. As to quaternary structure, homodimer. Forms a heterotetramer composed of two Mre11 subunits and two Rad50 subunits. The cofactor is Zn(2+).

Functionally, part of the Rad50/Mre11 complex, which is involved in the early steps of DNA double-strand break (DSB) repair. The complex may facilitate opening of the processed DNA ends to aid in the recruitment of HerA and NurA. Rad50 controls the balance between DNA end bridging and DNA resection via ATP-dependent structural rearrangements of the Rad50/Mre11 complex. The chain is DNA double-strand break repair Rad50 ATPase from Thermoplasma volcanium (strain ATCC 51530 / DSM 4299 / JCM 9571 / NBRC 15438 / GSS1).